Reading from the N-terminus, the 152-residue chain is MFRGATMVNLDSKGRLAVPTRYRDLLNEESQGQMVCTIDLHQPCLLLYTLPAWEVIEQKLSRLSSMNPAERRVQRLLLGHASECQMDGAGRLLIAGTLRQHAGLNKEVMLVGQFNKFELWDEQTWYQQVKDDIDAEQSTQEPLSERLQDLSL.

SpoVT-AbrB domains follow at residues 5 to 52 (ATMV…TLPA) and 81 to 124 (ASEC…DEQT).

It belongs to the MraZ family. In terms of assembly, forms oligomers.

Its subcellular location is the cytoplasm. The protein resides in the nucleoid. Its function is as follows. Negatively regulates its own expression and that of the subsequent genes in the proximal part of the division and cell wall (dcw) gene cluster. Acts by binding directly to DNA. May also regulate the expression of genes outside the dcw cluster. The sequence is that of Transcriptional regulator MraZ from Yersinia enterocolitica serotype O:8 / biotype 1B (strain NCTC 13174 / 8081).